The following is a 104-amino-acid chain: Large ribosomal subunit protein uL24 (104 aa).

Belongs to the universal ribosomal protein uL24 family. In terms of assembly, part of the 50S ribosomal subunit.

Its function is as follows. One of two assembly initiator proteins, it binds directly to the 5'-end of the 23S rRNA, where it nucleates assembly of the 50S subunit. Functionally, one of the proteins that surrounds the polypeptide exit tunnel on the outside of the subunit. This Bradyrhizobium sp. (strain ORS 278) protein is Large ribosomal subunit protein uL24.